The chain runs to 210 residues: MSKTSESKQMAVLRFIYERVNEKGYPPTVREIGEAVDLSSTSTVHGHISRLEKKGYIQKDPTKPRAIEVTPAGFEALGVETTPHQIPVLGTVTAGQPILAVQEATDYFPIPKELESFGGDLFMLTIRGESMINIGIMNGDQVIVRRQSSADNGDIIIAMTDENEATCKRFFKEADHYRLQPENDTMAPIILNNVSVLGKVVGLYRDMLFQ.

Residues 29-49 constitute a DNA-binding region (H-T-H motif); the sequence is VREIGEAVDLSSTSTVHGHIS. Active-site for autocatalytic cleavage activity residues include Ser130 and Lys168.

It belongs to the peptidase S24 family. As to quaternary structure, homodimer.

It carries out the reaction Hydrolysis of Ala-|-Gly bond in repressor LexA.. Its function is as follows. Represses a number of genes involved in the response to DNA damage (SOS response), including recA and lexA. In the presence of single-stranded DNA, RecA interacts with LexA causing an autocatalytic cleavage which disrupts the DNA-binding part of LexA, leading to derepression of the SOS regulon and eventually DNA repair. The polypeptide is LexA repressor (Lactiplantibacillus plantarum (strain ATCC BAA-793 / NCIMB 8826 / WCFS1) (Lactobacillus plantarum)).